A 124-amino-acid chain; its full sequence is Small ribosomal subunit protein uS12c (124 aa).

The segment at 105–124 is disordered; that stretch reads AGVKDRRQSRSKYGAKRPKA. Positions 113-124 are enriched in basic residues; the sequence is SRSKYGAKRPKA.

It belongs to the universal ribosomal protein uS12 family. In terms of assembly, part of the 30S ribosomal subunit.

It is found in the plastid. The protein localises to the cyanelle. Its function is as follows. With S4 and S5 plays an important role in translational accuracy. Located at the interface of the 30S and 50S subunits. This chain is Small ribosomal subunit protein uS12c (rps12), found in Cyanophora paradoxa.